Consider the following 167-residue polypeptide: Phosphopantetheine adenylyltransferase (167 aa).

Residue S10 participates in substrate binding. ATP-binding positions include 10–11 and H18; that span reads SF. 3 residues coordinate substrate: K42, A79, and R93. Residues 94 to 96, E104, and 129 to 135 contribute to the ATP site; these read GLR and VRHITAT.

Belongs to the bacterial CoaD family. As to quaternary structure, homohexamer. The cofactor is Mg(2+).

It is found in the cytoplasm. The enzyme catalyses (R)-4'-phosphopantetheine + ATP + H(+) = 3'-dephospho-CoA + diphosphate. The protein operates within cofactor biosynthesis; coenzyme A biosynthesis; CoA from (R)-pantothenate: step 4/5. In terms of biological role, reversibly transfers an adenylyl group from ATP to 4'-phosphopantetheine, yielding dephospho-CoA (dPCoA) and pyrophosphate. The protein is Phosphopantetheine adenylyltransferase of Beijerinckia indica subsp. indica (strain ATCC 9039 / DSM 1715 / NCIMB 8712).